The chain runs to 286 residues: Transcription initiation factor IIA large subunit (286 aa).

3 disordered regions span residues 120-145 (NTVE…ADVT), 167-195 (TVEN…KEKE), and 208-236 (KRSA…EGEE). Positions 175 to 195 (SEKKDDEEKEEDVEKTRKEKE) are enriched in basic and acidic residues. Residues 214 to 236 (DTDEVGSELDDSDDDYLISEGEE) show a composition bias toward acidic residues.

It belongs to the TFIIA subunit 1 family. TFIIA is a heterodimer composed of the large TOA1 and a small TOA2 subunits. Interacts with KAP122.

Its subcellular location is the cytoplasm. It is found in the nucleus. Its function is as follows. TFIIA is a component of the transcription machinery of RNA polymerase II and implicated in the regulation of basal transcription. Interacts with TBP (the TATA-binding protein). The protein is Transcription initiation factor IIA large subunit (TOA1) of Saccharomyces cerevisiae (strain ATCC 204508 / S288c) (Baker's yeast).